The following is a 491-amino-acid chain: Nicotinamide phosphoribosyltransferase (491 aa).

Met-1 carries the post-translational modification N-acetylmethionine. Tyr-188 bears the Phosphotyrosine mark. Arg-196 lines the diphosphate pocket. Asp-219 is a beta-nicotinamide D-ribonucleotide binding site. Diphosphate contacts are provided by His-247 and Arg-311. Beta-nicotinamide D-ribonucleotide contacts are provided by residues Arg-311–Asp-313, Gly-353–Asp-354, Gly-384, and Arg-392. Ser-472 is subject to Phosphoserine.

The protein belongs to the NAPRTase family. Homodimer. In terms of tissue distribution, expressed in various tissues. At the highest level in liver and at the second highest in heart. The amount is higher in heart than in lung.

It localises to the nucleus. The protein resides in the cytoplasm. The protein localises to the secreted. It carries out the reaction beta-nicotinamide D-ribonucleotide + diphosphate = 5-phospho-alpha-D-ribose 1-diphosphate + nicotinamide + H(+). Its pathway is cofactor biosynthesis; NAD(+) biosynthesis; nicotinamide D-ribonucleotide from 5-phospho-alpha-D-ribose 1-diphosphate and nicotinamide: step 1/1. Its function is as follows. Catalyzes the condensation of nicotinamide with 5-phosphoribosyl-1-pyrophosphate to yield nicotinamide mononucleotide, an intermediate in the biosynthesis of NAD. It is the rate limiting component in the mammalian NAD biosynthesis pathway. The secreted form behaves both as a cytokine with immunomodulating properties and an adipokine with anti-diabetic properties, it has no enzymatic activity, partly because of lack of activation by ATP, which has a low level in extracellular space and plasma. Plays a role in the modulation of circadian clock function. NAMPT-dependent oscillatory production of NAD regulates oscillation of clock target gene expression by releasing the core clock component: CLOCK-BMAL1 heterodimer from NAD-dependent SIRT1-mediated suppression. In Rattus norvegicus (Rat), this protein is Nicotinamide phosphoribosyltransferase (Nampt).